The following is a 715-amino-acid chain: Lactococcin-A transport/processing ATP-binding protein LcnC (715 aa).

One can recognise a Peptidase C39 domain in the interval 11 to 138 (QVDEMDCGCA…SEWTGISLFL (128 aa)). Cys-17 is an active-site residue. A run of 6 helical transmembrane segments spans residues 167–187 (VILN…LGSY), 197–217 (IPNA…LTYI), 237–257 (LAID…MSFF), 282–302 (TILS…ILGL), 307–327 (LFLL…IFTP), and 396–416 (AIIQ…LVIS). Residues 168 to 450 (ILNIVIASFI…IINLQTKLQK (283 aa)) form the ABC transmembrane type-1 domain. An ABC transporter domain is found at 482–715 (LNMSDISYQY…NGFYEQLYHN (234 aa)). 515–522 (GMSGSGKS) lines the ATP pocket.

It belongs to the ABC transporter superfamily. Bacteriocin (lactococcin) exporter (TC 3.A.1.112.3) family.

It localises to the cell membrane. In terms of biological role, involved in the export process of the bacteriocin lactococcin A. In Lactococcus lactis subsp. lactis (Streptococcus lactis), this protein is Lactococcin-A transport/processing ATP-binding protein LcnC (lcnC).